We begin with the raw amino-acid sequence, 91 residues long: Small ribosomal subunit protein uS19 (91 aa).

The protein belongs to the universal ribosomal protein uS19 family.

Functionally, protein S19 forms a complex with S13 that binds strongly to the 16S ribosomal RNA. The polypeptide is Small ribosomal subunit protein uS19 (Bordetella petrii (strain ATCC BAA-461 / DSM 12804 / CCUG 43448)).